The chain runs to 300 residues: Lysenin-related protein 3 (300 aa).

The N-terminal cap domain stretch occupies residues 12–35 (EEIEVDVVAVWKEGYVYENRGDTS). The segment at 36–109 (VEQKITMTKG…SQVIEHTVTI (74 aa)) is beta-hairpin domain. Residues 110-158 (PPTSKFTRWKLNADVGGTDIEYMYLIDEVTPISVTQTIPQVIRSRAKIL) form an N-terminal cap domain region. The interval 159–299 (VGRQIHLGTT…EDKWILEVVN (141 aa)) is C-terminal receptor-binding domain. Residues Lys187, Ser229, Tyr235, and Tyr284 each coordinate an N-(acyl)-sphingosylphosphocholine. Cys274 and Cys285 are disulfide-bonded.

The protein belongs to the lysenin family. As to quaternary structure, binds to sphingomyelin as a monomer by using its C-terminal domain. Forms a nonamer when sphingomyelin/LRP-3 ratio is lower than ca 500. Oligomerization, but not binding, is influenced by the fluidity of sphingomyelin. As to expression, expressed by coelomocytes.

Its subcellular location is the secreted. The protein localises to the target cell membrane. Its function is as follows. Pore-forming toxin that specifically binds sphingomyelin in the plasma membrane of various cells. Has antibacterial and hemolytic activity. The sequence is that of Lysenin-related protein 3 from Eisenia fetida (Red wiggler worm).